The sequence spans 39 residues: Antimicrobial peptide CHP1 (39 aa).

3 disulfides stabilise this stretch: cysteine 6-cysteine 28, cysteine 13-cysteine 34, and cysteine 18-cysteine 35.

Its function is as follows. Bactericidal activity; inhibits S.aureus and E.coli. The chain is Antimicrobial peptide CHP1 from Gallus gallus (Chicken).